The chain runs to 517 residues: Zinc finger protein AEBP2 (517 aa).

The interval 1–229 is disordered; sequence MAAAITDMAD…DSEDSISSTI (229 aa). Residue alanine 2 is modified to N-acetylalanine. Phosphoserine is present on residues serine 18 and serine 24. Residues 36 to 51 show a composition bias toward acidic residues; that stretch reads PEEEEEEEEEEEEAEA. Residues 61-78 show a composition bias toward gly residues; that stretch reads GGSGGGGGGGGGGVGGGE. Over residues 94-121 the composition is skewed to acidic residues; sequence GEDEDEEEDDEEEEDESSSSGGGEEESS. The span at 122 to 150 shows a compositional bias: low complexity; it reads AESLVGSSGGSSSDETRSLSPGAASSSSG. Serine 141 is modified (phosphoserine). The segment covering 152-163 has biased composition (basic and acidic residues); it reads GDGKEGLEEPKG. Composition is skewed to gly residues over residues 166 to 175 and 185 to 196; these read GSQGGGGGGS and GDEGYGTGGGGS. 3 positions are modified to phosphoserine: serine 206, serine 210, and serine 211. An interaction with RBBP4 region spans residues 209-294; that stretch reads MSSDGEPLSR…IHVDGQRGGV (86 aa). The C2H2-type 1 zinc-finger motif lies at 261–286; the sequence is YNCCWDQCQACFNSSPDLADHIRSIH. Residues 300-322 form a C2H2-type 2; degenerate zinc finger; that stretch reads KGCKVYNTPSTSQSWLQRHMLTH. The segment at 328-352 adopts a C2H2-type 3 zinc-finger fold; the sequence is FKCVVGGCNASFASQGGLARHVPTH. The segment covering 352–365 has biased composition (polar residues); it reads HFSQQNSSKVSSQP. The disordered stretch occupies residues 352-394; sequence HFSQQNSSKVSSQPKAKEESPSKAGMNKRRKLKNKRRRSLPRP. The span at 377–392 shows a compositional bias: basic residues; the sequence is MNKRRKLKNKRRRSLP. A Phosphoserine modification is found at serine 390. The interaction with SUZ12 stretch occupies residues 407–478; it reads RHRAICFNLS…QLKTKVVHLS (72 aa). The important for nucleosome binding activity of the PRC2 complex stretch occupies residues 495 to 517; it reads TMPQKRLKRTLIRKVFNLYLSKQ.

This sequence belongs to the AEBP2/jing C2H2-type zinc-finger family. Self-associates. Associates with the PRC2 complex, which consists of the core components EED, EZH1 or EZH2, SUZ12, and RBBP4, and various combinations of accessory subunits including AEBP2, JARID2, PHF19, MTF2 and EPOP. Found in a monomeric PRC2.2 (class 2) complex consisting of at least SUZ12, RBBP4, AEBP2 and JARID2. Within the PRC2 complex, interacts directly with SUZ12; competes with PHF19 for SUZ12 binding. Interacts with EED, EZH2, and RBBP4. May also interact with RBBP7.

The protein resides in the nucleus. Acts as an accessory subunit for the core Polycomb repressive complex 2 (PRC2), which mediates histone H3K27 (H3K27me3) trimethylation on chromatin leading to transcriptional repression of the affected target gene. Plays a role in nucleosome localization of the PRC2 complex. The chain is Zinc finger protein AEBP2 (AEBP2) from Homo sapiens (Human).